A 964-amino-acid chain; its full sequence is Glycine dehydrogenase (decarboxylating) (964 aa).

Lys710 is modified (N6-(pyridoxal phosphate)lysine).

It belongs to the GcvP family. The glycine cleavage system is composed of four proteins: P, T, L and H. The cofactor is pyridoxal 5'-phosphate.

It catalyses the reaction N(6)-[(R)-lipoyl]-L-lysyl-[glycine-cleavage complex H protein] + glycine + H(+) = N(6)-[(R)-S(8)-aminomethyldihydrolipoyl]-L-lysyl-[glycine-cleavage complex H protein] + CO2. The glycine cleavage system catalyzes the degradation of glycine. The P protein binds the alpha-amino group of glycine through its pyridoxal phosphate cofactor; CO(2) is released and the remaining methylamine moiety is then transferred to the lipoamide cofactor of the H protein. This is Glycine dehydrogenase (decarboxylating) from Saccharophagus degradans (strain 2-40 / ATCC 43961 / DSM 17024).